Here is a 315-residue protein sequence, read N- to C-terminus: CRISPR-associated endonuclease Cas1 1 (315 aa).

Mn(2+) contacts are provided by E144, H208, and E223.

This sequence belongs to the CRISPR-associated endonuclease Cas1 family. As to quaternary structure, homodimer, forms a heterotetramer with a Cas2 homodimer. It depends on Mg(2+) as a cofactor. Mn(2+) is required as a cofactor.

Functionally, CRISPR (clustered regularly interspaced short palindromic repeat), is an adaptive immune system that provides protection against mobile genetic elements (viruses, transposable elements and conjugative plasmids). CRISPR clusters contain spacers, sequences complementary to antecedent mobile elements, and target invading nucleic acids. CRISPR clusters are transcribed and processed into CRISPR RNA (crRNA). Acts as a dsDNA endonuclease. Involved in the integration of spacer DNA into the CRISPR cassette. The sequence is that of CRISPR-associated endonuclease Cas1 1 from Thermus thermophilus (strain ATCC 27634 / DSM 579 / HB8).